Reading from the N-terminus, the 301-residue chain is NADH-cytochrome b5 reductase 3 (301 aa).

Residue G2 is the site of N-myristoyl glycine attachment. Residues 40–152 form the FAD-binding FR-type domain; the sequence is DIKYSLRLID…RGPNGLLVYQ (113 aa). K42 is modified (N6-acetyllysine). Y43 bears the Phosphotyrosine mark. Residues R92, P93, Y94, V109, K111, and F114 each coordinate FAD. At K120 the chain carries N6-acetyllysine. 4 residues coordinate FAD: K126, M127, S128, and T185.

The protein belongs to the flavoprotein pyridine nucleotide cytochrome reductase family. Component of a complex composed of cytochrome b5, NADH-cytochrome b5 reductase (CYB5R3) and MTARC2. Interacts with MTLN; the interaction is required to maintain cellular lipid composition and leads to stimulation of mitochondrial respiratory complex I activity. Requires FAD as cofactor.

The protein resides in the endoplasmic reticulum membrane. It is found in the mitochondrion outer membrane. The catalysed reaction is 2 Fe(III)-[cytochrome b5] + NADH = 2 Fe(II)-[cytochrome b5] + NAD(+) + H(+). Its function is as follows. Catalyzes the reduction of two molecules of cytochrome b5 using NADH as the electron donor. The polypeptide is NADH-cytochrome b5 reductase 3 (CYB5R3) (Macaca fascicularis (Crab-eating macaque)).